Reading from the N-terminus, the 254-residue chain is MQVQCQQSPVLAGSATLVALGALALYVAKPSGYGKHTESLKPAATRLPARAAWFLQELPSFAVPAGILARQPLSLFGPPGTVLLGLFCLHYFHRTFVYSLLNRGRPYPAILILRGTAFCTGNGVLQGYYLIYCAEYPDGWYTDIRFSLGVFLFILGMGINIHSDYILRQLRKPGEISYRIPQGGLFTYVSGANFLGEIIEWIGYALATWSLPALAFAFFSLCFLGLRAFHHHRFYLKMFEDYPKSRKALIPFIF.

The next 4 membrane-spanning stretches (helical) occupy residues 8–28 (SPVL…LYVA), 72–92 (PLSL…LHYF), 146–166 (FSLG…SDYI), and 206–226 (LATW…FLGL).

Belongs to the steroid 5-alpha reductase family. As to expression, expressed in high levels in the prostate and many other androgen-sensitive tissues.

The protein localises to the microsome membrane. It localises to the endoplasmic reticulum membrane. The enzyme catalyses a 3-oxo-5alpha-steroid + NADP(+) = a 3-oxo-Delta(4)-steroid + NADPH + H(+). It carries out the reaction 17beta-hydroxy-5alpha-androstan-3-one + NADP(+) = testosterone + NADPH + H(+). It catalyses the reaction 5alpha-pregnane-3,20-dione + NADP(+) = progesterone + NADPH + H(+). In terms of biological role, converts testosterone (T) into 5-alpha-dihydrotestosterone (DHT) and progesterone or corticosterone into their corresponding 5-alpha-3-oxosteroids. It plays a central role in sexual differentiation and androgen physiology. In Homo sapiens (Human), this protein is 3-oxo-5-alpha-steroid 4-dehydrogenase 2 (SRD5A2).